Reading from the N-terminus, the 240-residue chain is MSCNGCRVLRKGCSETCILRPCLQWIESAESQGHATVFVAKFFGRAGLMSFISSVPELQRPALFQSLLFEACGRTVNPVNGAVGMLWTRNWHVCQAAVETVLRGGTLRPISDLLESPSLMISCDESSEIWHQDVSRNQTHHCRFSTSRSTTEMKDSLVNRKRLKSDSDLDLQVNHGLTLTAPAVPVPFLPPSSFCKVVKGDRPGSPSEESVTTSCWENGMRGDNKQKRNKGEKKLLNLFV.

Residues 1-107 enclose the LOB domain; the sequence is MSCNGCRVLR…VETVLRGGTL (107 aa). A disordered region spans residues 200 to 233; sequence GDRPGSPSEESVTTSCWENGMRGDNKQKRNKGEK. Over residues 207–216 the composition is skewed to polar residues; the sequence is SEESVTTSCW.

The protein belongs to the LOB domain-containing protein family. As to expression, expressed in young shoots, roots, stems, leaves and flowers.

The sequence is that of LOB domain-containing protein 39 (LBD39) from Arabidopsis thaliana (Mouse-ear cress).